Here is a 99-residue protein sequence, read N- to C-terminus: Large ribosomal subunit protein uL23 (99 aa).

It belongs to the universal ribosomal protein uL23 family. As to quaternary structure, part of the 50S ribosomal subunit. Contacts protein L29, and trigger factor when it is bound to the ribosome.

In terms of biological role, one of the early assembly proteins it binds 23S rRNA. One of the proteins that surrounds the polypeptide exit tunnel on the outside of the ribosome. Forms the main docking site for trigger factor binding to the ribosome. The protein is Large ribosomal subunit protein uL23 of Pseudomonas fluorescens (strain SBW25).